A 77-amino-acid chain; its full sequence is Large ribosomal subunit protein uL24 (77 aa).

A disordered region spans residues 42 to 61 (KKHQKPSQTNANGGVVESEG).

This sequence belongs to the universal ribosomal protein uL24 family. As to quaternary structure, part of the 50S ribosomal subunit.

One of two assembly initiator proteins, it binds directly to the 5'-end of the 23S rRNA, where it nucleates assembly of the 50S subunit. Functionally, one of the proteins that surrounds the polypeptide exit tunnel on the outside of the subunit. This chain is Large ribosomal subunit protein uL24, found in Lactobacillus acidophilus (strain ATCC 700396 / NCK56 / N2 / NCFM).